Reading from the N-terminus, the 173-residue chain is Shikimate kinase 1 (173 aa).

Gly-14 to Thr-19 is an ATP binding site. Residue Ser-18 participates in Mg(2+) binding. Positions 36, 60, and 82 each coordinate substrate. Residue Arg-120 participates in ATP binding. Residue Arg-140 coordinates substrate. Position 157 (Gln-157) interacts with ATP.

The protein belongs to the shikimate kinase family. As to quaternary structure, monomer. The cofactor is Mg(2+).

The protein resides in the cytoplasm. The catalysed reaction is shikimate + ATP = 3-phosphoshikimate + ADP + H(+). It functions in the pathway metabolic intermediate biosynthesis; chorismate biosynthesis; chorismate from D-erythrose 4-phosphate and phosphoenolpyruvate: step 5/7. Its function is as follows. Catalyzes the specific phosphorylation of the 3-hydroxyl group of shikimic acid using ATP as a cosubstrate. This Serratia proteamaculans (strain 568) protein is Shikimate kinase 1.